Reading from the N-terminus, the 37-residue chain is Natriuretic peptide PNP (37 aa).

A disulfide bridge links Cys14 with Cys30.

As to expression, expressed by the venom gland.

It is found in the secreted. Increases urine flow and decreases blood pressure when administered to rats by intravenous injection. Inhibits thrombin-induced platelet aggregation. Stimulates cGMP production via the natriuretic peptide receptor-A (NPR1). This is Natriuretic peptide PNP from Pseudocerastes persicus (Persian horned viper).